Here is a 226-residue protein sequence, read N- to C-terminus: Cytidylate kinase (226 aa).

ATP is bound at residue 10-18; that stretch reads GPASSGKST.

It belongs to the cytidylate kinase family. Type 1 subfamily.

It localises to the cytoplasm. It catalyses the reaction CMP + ATP = CDP + ADP. The catalysed reaction is dCMP + ATP = dCDP + ADP. In Streptococcus pyogenes serotype M28 (strain MGAS6180), this protein is Cytidylate kinase.